The sequence spans 425 residues: Succinate--CoA ligase [ADP-forming] subunit beta, mitochondrial (425 aa).

A mitochondrion-targeting transit peptide spans N1–N14. Residues M23 to I250 enclose the ATP-grasp domain. K40 bears the N6-acetyllysine mark. At Y46 the chain carries Phosphotyrosine. N6-acetyllysine; alternate is present on K50. The residue at position 50 (K50) is an N6-succinyllysine; alternate. ATP is bound by residues K60 and G67–G69. An N6-acetyllysine mark is found at K91, K101, K105, and K178. Mg(2+) contacts are provided by N220 and D234. S241 carries the post-translational modification Phosphoserine. Residue N285 participates in substrate binding. T303 carries the phosphothreonine modification. K330 is modified (N6-acetyllysine). G342–M344 is a binding site for substrate. N6-acetyllysine is present on K400.

Belongs to the succinate/malate CoA ligase beta subunit family. ATP-specific subunit beta subfamily. As to quaternary structure, heterodimer of an alpha and a beta subunit. The beta subunit determines specificity for ATP. Interacts with ALAS2. Mg(2+) serves as cofactor.

The protein resides in the mitochondrion. The catalysed reaction is succinate + ATP + CoA = succinyl-CoA + ADP + phosphate. It functions in the pathway carbohydrate metabolism; tricarboxylic acid cycle; succinate from succinyl-CoA (ligase route): step 1/1. ATP-specific succinyl-CoA synthetase functions in the citric acid cycle (TCA), coupling the hydrolysis of succinyl-CoA to the synthesis of ATP and thus represents the only step of substrate-level phosphorylation in the TCA. The beta subunit provides nucleotide specificity of the enzyme and binds the substrate succinate, while the binding sites for coenzyme A and phosphate are found in the alpha subunit. This is Succinate--CoA ligase [ADP-forming] subunit beta, mitochondrial from Sus scrofa (Pig).